An 89-amino-acid chain; its full sequence is Large ribosomal subunit protein bL27 (89 aa).

The protein belongs to the bacterial ribosomal protein bL27 family.

This Ruegeria sp. (strain TM1040) (Silicibacter sp.) protein is Large ribosomal subunit protein bL27.